Reading from the N-terminus, the 881-residue chain is Mechanosensitive ion channel protein 4 (881 aa).

Residues 35–245 are disordered; that stretch reads FWHNDKSSKP…EEEDPFSEED (211 aa). A compositionally biased stretch (basic and acidic residues) spans 56-66; it reads FMRRSSEKSEE. Polar residues-rich tracts occupy residues 73–82, 100–118, and 206–230; these read LINQFLNKQK, QKNTVPPLSSTAVSGSASP, and TPRSGNLNPGFSGRNTKPGTPNQGG. Residues 234–245 are compositionally biased toward acidic residues; sequence LEEEEDPFSEED. The next 4 membrane-spanning stretches (helical) occupy residues 255–275, 297–317, 339–359, and 377–397; these read ICVWVIIEWIFLILIIASLIC, VMVLVLICGRLVSSWIVKLFV, KPVQNCLWLGLVLIAWHFLFD, and VLICLLVAVIIWLIKTLLVKV. A disordered region spans residues 457–501; that stretch reads GPKAVSSPPQVTVGSGRLQKSPSRVGKSPVLSRSGSKKEGGEEGI. Residues 463-478 are compositionally biased toward polar residues; the sequence is SPPQVTVGSGRLQKSP. Residues 492–501 show a composition bias toward basic and acidic residues; that stretch reads SKKEGGEEGI. The next 2 membrane-spanning stretches (helical) occupy residues 643-663 and 678-698; these read IVDVLVSIVILIIWLLILGIA and VVFVFGNSCKTIFEAVIFVFV.

The protein belongs to the MscS (TC 1.A.23) family.

It localises to the membrane. Functionally, mechanosensitive channel that opens in response to stretch forces in the membrane lipid bilayer. This Arabidopsis thaliana (Mouse-ear cress) protein is Mechanosensitive ion channel protein 4 (MSL4).